A 47-amino-acid chain; its full sequence is STKNGRDSNPKYLGVKTCHAQFVTAGSILVRQRGSKFHHGQNVGVAK.

It belongs to the bacterial ribosomal protein bL27 family.

The protein localises to the plastid. It is found in the chloroplast. The sequence is that of Large ribosomal subunit protein bL27c-2 from Cyanidium caldarium (Red alga).